The chain runs to 73 residues: Putative membrane protein insertion efficiency factor (73 aa).

The protein belongs to the UPF0161 family.

Its subcellular location is the cell inner membrane. Could be involved in insertion of integral membrane proteins into the membrane. The sequence is that of Putative membrane protein insertion efficiency factor from Bacteroides fragilis (strain ATCC 25285 / DSM 2151 / CCUG 4856 / JCM 11019 / LMG 10263 / NCTC 9343 / Onslow / VPI 2553 / EN-2).